The sequence spans 137 residues: Protein MesC (137 aa).

The polypeptide is Protein MesC (mesC) (Leuconostoc mesenteroides).